The primary structure comprises 195 residues: CASP-like protein Os03g0196400 (195 aa).

Residues 1-38 are Cytoplasmic-facing; that stretch reads MRQQQAGGVGDGVSPGNVPVCYYGPGGRVPSSLERRAR. A helical transmembrane segment spans residues 39–59; the sequence is AAEVLLRCAACGLAVLAAALL. The Extracellular segment spans residues 60 to 81; the sequence is GADRQTRVFFSIQKVARYTDMQ. The chain crosses the membrane as a helical span at residues 82 to 102; that stretch reads SLVLLVIANGMAACYSLIQCA. Topologically, residues 103–104 are cytoplasmic; it reads RC. Residues 105–125 form a helical membrane-spanning segment; sequence LVMAYIVISAVAAAMEAALIG. Residues 126–150 lie on the Extracellular side of the membrane; that stretch reads KYGQPEFQWMKTCHLYKRFCAQAGG. The helical transmembrane segment at 151-171 threads the bilayer; that stretch reads GVACAIAASVNMVGVALISAF. Over 172 to 195 the chain is Cytoplasmic; that stretch reads NLFRLYGNSNGGGKATTTTMAGGK.

The protein belongs to the Casparian strip membrane proteins (CASP) family. Homodimer and heterodimers.

It is found in the cell membrane. The sequence is that of CASP-like protein Os03g0196400 from Oryza sativa subsp. japonica (Rice).